A 306-amino-acid chain; its full sequence is MGNLDDNKFTWVIKNVPTLNSDMLFSNYFVIGGCSWRVVAHSKENNFKESLSLTLIVAEDSAQKMGCGWSRYAKIIFTLVNQISEILSQRIETMFDQKSSVFSSETMFSIGKFDEHFAGFIVNGEIKIVVEFLEIIDKLVLSKESNPPFKKTKLNNDGEVSKDLIREVPVIMESIVVNGFHVLPSQVEFVKRIFEKHPDVAKEFRPTNRIVKTAYMNVLLSLIETLRQSPREISKNDLDGACGLLRSMKEAGFKLDWLEKKLNEVLEKKEKEESYETRMREIEEEMKDLKAKALDVGAPLRLDDVV.

The region spanning 6–132 (DNKFTWVIKN…NGEIKIVVEF (127 aa)) is the MATH domain. The stretch at 253 to 298 (FKLDWLEKKLNEVLEKKEKEESYETRMREIEEEMKDLKAKALDVGA) forms a coiled coil.

In Arabidopsis thaliana (Mouse-ear cress), this protein is MATH domain and coiled-coil domain-containing protein At3g29580.